A 232-amino-acid polypeptide reads, in one-letter code: 5'-methylthioadenosine/S-adenosylhomocysteine nucleosidase (232 aa).

Glu12 (proton acceptor) is an active-site residue. Substrate-binding positions include Gly78, Val152, and 173-174 (ME). The Proton donor role is filled by Asp197.

This sequence belongs to the PNP/UDP phosphorylase family. MtnN subfamily. In terms of assembly, homodimer.

It carries out the reaction S-adenosyl-L-homocysteine + H2O = S-(5-deoxy-D-ribos-5-yl)-L-homocysteine + adenine. It catalyses the reaction S-methyl-5'-thioadenosine + H2O = 5-(methylsulfanyl)-D-ribose + adenine. The enzyme catalyses 5'-deoxyadenosine + H2O = 5-deoxy-D-ribose + adenine. The protein operates within amino-acid biosynthesis; L-methionine biosynthesis via salvage pathway; S-methyl-5-thio-alpha-D-ribose 1-phosphate from S-methyl-5'-thioadenosine (hydrolase route): step 1/2. Catalyzes the irreversible cleavage of the glycosidic bond in both 5'-methylthioadenosine (MTA) and S-adenosylhomocysteine (SAH/AdoHcy) to adenine and the corresponding thioribose, 5'-methylthioribose and S-ribosylhomocysteine, respectively. Also cleaves 5'-deoxyadenosine, a toxic by-product of radical S-adenosylmethionine (SAM) enzymes, into 5-deoxyribose and adenine. Thus, is required for in vivo function of the radical SAM enzymes biotin synthase and lipoic acid synthase, that are inhibited by 5'-deoxyadenosine accumulation. This Buchnera aphidicola subsp. Acyrthosiphon pisum (strain 5A) protein is 5'-methylthioadenosine/S-adenosylhomocysteine nucleosidase.